The following is a 458-amino-acid chain: uncharacterized protein (458 aa).

The TRAM domain occupies 8–66; sequence PVEKNEFIDVVFEDLTHDGAGVAKVKGYPIFVKNGLPGEEAQIKIIKVKKNFAFGRLMK. [4Fe-4S] cluster contacts are provided by Cys79, Cys85, Cys88, and Cys166. The S-adenosyl-L-methionine site is built by Gln290, Tyr319, Glu340, and Asp388. The Nucleophile role is filled by Cys415.

The protein belongs to the class I-like SAM-binding methyltransferase superfamily. RNA M5U methyltransferase family.

This is an uncharacterized protein from Bacillus cereus (strain ATCC 14579 / DSM 31 / CCUG 7414 / JCM 2152 / NBRC 15305 / NCIMB 9373 / NCTC 2599 / NRRL B-3711).